The chain runs to 180 residues: Cell division protein ZapC (180 aa).

It belongs to the ZapC family. As to quaternary structure, interacts directly with FtsZ.

It is found in the cytoplasm. Functionally, contributes to the efficiency of the cell division process by stabilizing the polymeric form of the cell division protein FtsZ. Acts by promoting interactions between FtsZ protofilaments and suppressing the GTPase activity of FtsZ. The polypeptide is Cell division protein ZapC (Vibrio vulnificus (strain CMCP6)).